A 304-amino-acid chain; its full sequence is UDP-3-O-acyl-N-acetylglucosamine deacetylase (304 aa).

Positions 79, 238, and 242 each coordinate Zn(2+). The active-site Proton donor is histidine 265.

This sequence belongs to the LpxC family. It depends on Zn(2+) as a cofactor.

It carries out the reaction a UDP-3-O-[(3R)-3-hydroxyacyl]-N-acetyl-alpha-D-glucosamine + H2O = a UDP-3-O-[(3R)-3-hydroxyacyl]-alpha-D-glucosamine + acetate. It functions in the pathway glycolipid biosynthesis; lipid IV(A) biosynthesis; lipid IV(A) from (3R)-3-hydroxytetradecanoyl-[acyl-carrier-protein] and UDP-N-acetyl-alpha-D-glucosamine: step 2/6. In terms of biological role, catalyzes the hydrolysis of UDP-3-O-myristoyl-N-acetylglucosamine to form UDP-3-O-myristoylglucosamine and acetate, the committed step in lipid A biosynthesis. The protein is UDP-3-O-acyl-N-acetylglucosamine deacetylase of Photobacterium profundum (strain SS9).